Reading from the N-terminus, the 116-residue chain is MKKRNRLKKNEDFQKVFKRGTSMANRQFVLYTLDQPKQEELRVGLSVSKKIGNAVVRNRVKRLIRQAVQEEKELLKPKDFIIIARKPAGDLSFEETKKSLQHLFRKTSLYKKSSSK.

This sequence belongs to the RnpA family. As to quaternary structure, consists of a catalytic RNA component (M1 or rnpB) and a protein subunit.

The catalysed reaction is Endonucleolytic cleavage of RNA, removing 5'-extranucleotides from tRNA precursor.. Its function is as follows. RNaseP catalyzes the removal of the 5'-leader sequence from pre-tRNA to produce the mature 5'-terminus. It can also cleave other RNA substrates such as 4.5S RNA. The protein component plays an auxiliary but essential role in vivo by binding to the 5'-leader sequence and broadening the substrate specificity of the ribozyme. This chain is Ribonuclease P protein component, found in Bacillus velezensis (strain DSM 23117 / BGSC 10A6 / LMG 26770 / FZB42) (Bacillus amyloliquefaciens subsp. plantarum).